A 573-amino-acid chain; its full sequence is Proline--tRNA ligase (573 aa).

The protein belongs to the class-II aminoacyl-tRNA synthetase family. ProS type 1 subfamily. In terms of assembly, homodimer.

It localises to the cytoplasm. The catalysed reaction is tRNA(Pro) + L-proline + ATP = L-prolyl-tRNA(Pro) + AMP + diphosphate. Functionally, catalyzes the attachment of proline to tRNA(Pro) in a two-step reaction: proline is first activated by ATP to form Pro-AMP and then transferred to the acceptor end of tRNA(Pro). As ProRS can inadvertently accommodate and process non-cognate amino acids such as alanine and cysteine, to avoid such errors it has two additional distinct editing activities against alanine. One activity is designated as 'pretransfer' editing and involves the tRNA(Pro)-independent hydrolysis of activated Ala-AMP. The other activity is designated 'posttransfer' editing and involves deacylation of mischarged Ala-tRNA(Pro). The misacylated Cys-tRNA(Pro) is not edited by ProRS. This chain is Proline--tRNA ligase, found in Geobacter sp. (strain M21).